Reading from the N-terminus, the 415-residue chain is uncharacterized protein (415 aa).

The next 10 helical transmembrane spans lie at 20–40, 43–63, 78–98, 109–129, 155–175, 243–263, 300–320, 328–348, 360–380, and 388–408; these read MAYL…FGIL, LMPI…PAIA, IPIL…TPYI, LPNI…VIAF, VILV…LSIS, IVIM…SSLI, IFSS…LIAF, GILC…YTLI, ISFY…LILV, and GSLA…FAIL.

Belongs to the polysaccharide synthase family.

It is found in the cell membrane. This is an uncharacterized protein from Methanocaldococcus jannaschii (strain ATCC 43067 / DSM 2661 / JAL-1 / JCM 10045 / NBRC 100440) (Methanococcus jannaschii).